Here is a 687-residue protein sequence, read N- to C-terminus: MATKQLAKQLGLIRRSSKTSQTSSNVSRPKARQFFEYLIIIDFESTCWKDGKHSTQEIIEFPAVLLNVSNGEIESEFHTYVQPQEHPILSDFCTELTGINQQQVDDGVPLKICLSQFNSWIQKLQKEKGIAFVTAVPTHSTAEHKMCAFVTWSDWDLGVCLLYECRRKQMKKPDILNSWIDLRATYKLFYNRRPKGLNGALQDLGIEFSGREHSGLDDSRNTAKLASRMICDGCVMKITKSLDKVNHKISYTRPQQVLPAQDSNSVQVGTIQTSEMHSEKNPQPSFDKTAACVNVMNLQKDLEPSSLKINGKPIGRDKAVTMLNGHQGQESLPSQTLINGLSTTLGNGPKRCFTNRTSLGTLQTGVSLGAFTSTPAELPSLGSGHVLMSTTVTSVTDISALDISSTSDCLSMLADWEDAAVIEDSQEEPSVPTTEQSDLLMAQTSVDVTLPGTNMANCNRNQKYGSFHPHSIAYQSRNTTIYNINVKQNVSSCSTFKVPGVLARRSTNMMPTSAQLNKMSTSLPSFPKRKLSSVSFYSPPKKQPFIIHEDKCSSNNRSLPVISSRPHNVPPTVLNATVNNTFKSAQTGKITAPMCNCGRRAKRLTVSNAGPNQGKAFYTCSVKKRNEENKKGCDYFKWEQTVVKEKSAQSTIILSKSGISFSSNTSFTAANSASRRSFVSLRPSMRT.

The region spanning 38 to 226 (LIIIDFESTC…DDSRNTAKLA (189 aa)) is the Exonuclease domain. Mg(2+) is bound by residues Asp42, Glu44, and Asp156. The Proton acceptor role is filled by Glu44. Glu44 contacts AMP. His213 functions as the Proton acceptor in the catalytic mechanism. His213 lines the AMP pocket. Asp218 serves as a coordination point for Mg(2+). Cys595, Cys597, Cys620, and Cys633 together coordinate Zn(2+). The GRF-type zinc-finger motif lies at 595–642 (CNCGRRAKRLTVSNAGPNQGKAFYTCSVKKRNEENKKGCDYFKWEQTV).

Belongs to the ERI2 family. Mg(2+) is required as a cofactor.

This chain is ERI1 exoribonuclease 2 (eri2), found in Xenopus laevis (African clawed frog).